Reading from the N-terminus, the 58-residue chain is MAGPESDGQFQFTGIKKYFNSYTLTGRMNCVLATYGGIALLVLYFKLRPKKTPAVKAT.

Residues lysine 16 and lysine 17 each carry the N6-acetyllysine modification. Residues 23–45 traverse the membrane as a helical segment; the sequence is TLTGRMNCVLATYGGIALLVLYF.

As to quaternary structure, component of the ATP synthase complex composed at least of ATP5F1A/subunit alpha, ATP5F1B/subunit beta, ATP5MC1/subunit c (homooctomer), MT-ATP6/subunit a, MT-ATP8/subunit 8, ATP5ME/subunit e, ATP5MF/subunit f, ATP5MG/subunit g, ATP5MK/subunit k, ATP5MJ/subunit j, ATP5F1C/subunit gamma, ATP5F1D/subunit delta, ATP5F1E/subunit epsilon, ATP5PF/subunit F6, ATP5PB/subunit b, ATP5PD/subunit d, ATP5PO/subunit OSCP. ATP synthase complex consists of a soluble F(1) head domain (subunits alpha(3) and beta(3)) - the catalytic core - and a membrane F(0) domain - the membrane proton channel (subunits c, a, 8, e, f, g, k and j). These two domains are linked by a central stalk (subunits gamma, delta, and epsilon) rotating inside the F1 region and a stationary peripheral stalk (subunits F6, b, d, and OSCP). The ATP synthase complex/complex V exists as a monomeric and a dimeric supercomplex that helps shape mitochondrial cristae to optimize proton flow. As to expression, ubiquitous. Highly expressed in skeletal and cardiac muscle. Moderately expressed in brain, thymus, stomach and testis. Lowest expression levels were detected in lung, liver, kidney, adrenal gland, spleen, small intestine and adipose tissue. In streptozotocin-induced diabetes, the insulin-sensitive tissues skeletal and cardiac muscle were down-regulated.

It localises to the mitochondrion membrane. Subunit k, of the mitochondrial membrane ATP synthase complex (F(1)F(0) ATP synthase or Complex V) that produces ATP from ADP in the presence of a proton gradient across the membrane which is generated by electron transport complexes of the respiratory chain. ATP synthase complex consist of a soluble F(1) head domain - the catalytic core - and a membrane F(1) domain - the membrane proton channel. These two domains are linked by a central stalk rotating inside the F(1) region and a stationary peripheral stalk. During catalysis, ATP synthesis in the catalytic domain of F(1) is coupled via a rotary mechanism of the central stalk subunits to proton translocation. In vivo, can only synthesize ATP although its ATP hydrolase activity can be activated artificially in vitro. Part of the complex F(0) domain. Required for dimerization of the ATP synthase complex and as such regulates ATP synthesis in the mitochondria. The chain is ATP synthase F(0) complex subunit k, mitochondrial (Atp5mk) from Rattus norvegicus (Rat).